The chain runs to 174 residues: NADH-quinone oxidoreductase subunit B (174 aa).

Residues Cys-51, Cys-52, Cys-116, and Cys-146 each contribute to the [4Fe-4S] cluster site.

This sequence belongs to the complex I 20 kDa subunit family. NDH-1 is composed of 14 different subunits. Subunits NuoB, C, D, E, F, and G constitute the peripheral sector of the complex. [4Fe-4S] cluster serves as cofactor.

The protein localises to the cell inner membrane. It catalyses the reaction a quinone + NADH + 5 H(+)(in) = a quinol + NAD(+) + 4 H(+)(out). In terms of biological role, NDH-1 shuttles electrons from NADH, via FMN and iron-sulfur (Fe-S) centers, to quinones in the respiratory chain. The immediate electron acceptor for the enzyme in this species is believed to be ubiquinone. Couples the redox reaction to proton translocation (for every two electrons transferred, four hydrogen ions are translocated across the cytoplasmic membrane), and thus conserves the redox energy in a proton gradient. The polypeptide is NADH-quinone oxidoreductase subunit B (Anaplasma phagocytophilum (strain HZ)).